Consider the following 450-residue polypeptide: Zinc finger protein 277 (450 aa).

Alanine 2 bears the N-acetylalanine mark. C2H2-type zinc fingers lie at residues 224 to 248 (LQCL…KKQH) and 355 to 381 (HQCR…ETKH).

It belongs to the ZNF277 family. As to quaternary structure, interacts (via zinc-finger domains) with RPS2/40S ribosomal protein S2, perhaps as nascent RPS2 is synthesized during translation; the interaction is direct; the interaction is extra-ribosomal. Interaction with RPS2 competes with the binding of RPS2 to protein arginine methyltransferase PRMT3. Interacts with Polycomb group (PcG) complex protein BMI1. May be part of a complex including at least ZNF277, BMI1 and RNF2/RING2.

It localises to the nucleus. Functionally, probable transcription factor. Involved in modulation of cellular senescence; represses transcription of the tumor suppressor gene INK4A/ARF, perhaps acting via the Polycomb group (PcG) complex PRC1. This Homo sapiens (Human) protein is Zinc finger protein 277 (ZNF277).